Here is a 461-residue protein sequence, read N- to C-terminus: Smoothelin-like protein 2 (461 aa).

The stretch at 55 to 88 forms a coiled coil; the sequence is PLARTVADLQRDNQRLQAQLERLTRQVEALGLAS. 2 disordered regions span residues 87–193 and 227–248; these read ASGM…LRLP and LNPSPSEVITPWTPSPSEKNSS. Over residues 94–107 the composition is skewed to pro residues; that stretch reads PGTPGTPSPPPAPG. Thr96 carries the post-translational modification Phosphothreonine. Ser101, Ser129, and Ser134 each carry phosphoserine. The segment covering 134-147 has biased composition (basic and acidic residues); sequence SLDHDEASESEMRK. Residues Ser256 and Ser269 each carry the phosphoserine modification. A disordered region spans residues 260–307; the sequence is AVTASKHSNSPPLVTPPQSPVSPQPPAITQVHRQGERRRELVRSQTLP. The segment covering 272–285 has biased composition (pro residues); it reads LVTPPQSPVSPQPP. At Thr274 the chain carries Phosphothreonine. A Phosphoserine modification is found at Ser278. Positions 292-301 are enriched in basic and acidic residues; that stretch reads RQGERRRELV. At Ser344 the chain carries Phosphoserine. One can recognise a Calponin-homology (CH) domain in the interval 351–458; that stretch reads SSIKQILLEW…YVQSLYNHLR (108 aa).

Belongs to the smoothelin family.

The polypeptide is Smoothelin-like protein 2 (SMTNL2) (Homo sapiens (Human)).